A 447-amino-acid chain; its full sequence is Na(+)-translocating NADH-quinone reductase subunit A (447 aa).

Belongs to the NqrA family. In terms of assembly, composed of six subunits; NqrA, NqrB, NqrC, NqrD, NqrE and NqrF.

The enzyme catalyses a ubiquinone + n Na(+)(in) + NADH + H(+) = a ubiquinol + n Na(+)(out) + NAD(+). NQR complex catalyzes the reduction of ubiquinone-1 to ubiquinol by two successive reactions, coupled with the transport of Na(+) ions from the cytoplasm to the periplasm. NqrA to NqrE are probably involved in the second step, the conversion of ubisemiquinone to ubiquinol. This is Na(+)-translocating NADH-quinone reductase subunit A from Yersinia pseudotuberculosis serotype O:1b (strain IP 31758).